Here is a 102-residue protein sequence, read N- to C-terminus: Acid shock protein (102 aa).

Residues 1-21 (MKKVLALVVAAAMGLSSAAFA) form the signal peptide. The propeptide occupies 22 to 58 (AETAITPAPTATTTKAAPAKTTHHKKQHKAAPAQKAQ). Positions 26–41 (ITPAPTATTTKAAPAK) are enriched in low complexity. A disordered region spans residues 26–102 (ITPAPTATTT…PAKPAAQPAA (77 aa)). Basic residues predominate over residues 80 to 90 (AAKKHAKKHSH). The span at 91-102 (QQPAKPAAQPAA) shows a compositional bias: low complexity.

This sequence belongs to the Asr family. In terms of processing, proteolytic processing gives rise to the active protein.

It is found in the periplasm. Its function is as follows. Required for growth and/or survival at acidic conditions. This is Acid shock protein from Escherichia coli O81 (strain ED1a).